The primary structure comprises 133 residues: GKAFDDGAFTGIREINLSYNKETAIGDFQVVYDLNGSPYVGQNHKSFITGFTPVKISLDFPSEYIMEVSGYTGNVSGYVVVRSLTFKTNKKTYGPYGVTSGTPFNLPIENGLIVGFKGSIGYWLDYFSMYLSL.

Positions 1-133 (GKAFDDGAFT…LDYFSMYLSL (133 aa)) constitute a Jacalin-type lectin domain. Positions 7–64 (GAFTGIREINLSYNKETAIGDFQVVYDLNGSPYVGQNHKSFITGFTPVKISLDFPSEY) form a repeat. N43 carries N-linked (GlcNAc...) asparagine; when associated with variant T-45; partial glycosylation. Positions 68–89 (VSGYTGNVSGYVVVRSLTFKTN) are igA-binding. An N-linked (GlcNAc...) asparagine; partial glycan is attached at N74. The segment at residues 76-130 (SGYVVVRSLTFKTNKKTYGPYGVTSGTPFNLPIENGLIVGFKGSIGYWLDYFSMY) is a repeat.

It belongs to the jacalin lectin family. In terms of assembly, tetramer of four alpha chains associated with two or four beta chains.

In terms of biological role, D-galactose-specific lectin, binds the T-antigen structure Gal-beta1,3-GalNAc (Thomsen-Friedenreich-antigen-specific lectin). Potent and selective stimulant of distinct T- and B-cell functions. Shows a unique ability to specifically recognize IgA-1 from human serum. The sequence is that of Agglutinin alpha chain from Artocarpus integer (Jack fruit).